Reading from the N-terminus, the 421-residue chain is Enolase 1 (421 aa).

Residue Gln164 participates in (2R)-2-phosphoglycerate binding. The Proton donor role is filled by Glu206. Mg(2+) is bound by residues Asp243, Glu287, and Asp314. (2R)-2-phosphoglycerate is bound by residues Lys339, Arg368, Ser369, and Lys390. Lys339 serves as the catalytic Proton acceptor.

It belongs to the enolase family. Component of the RNA degradosome, a multiprotein complex involved in RNA processing and mRNA degradation. It depends on Mg(2+) as a cofactor.

It localises to the cytoplasm. Its subcellular location is the secreted. The protein resides in the cell surface. The enzyme catalyses (2R)-2-phosphoglycerate = phosphoenolpyruvate + H2O. It participates in carbohydrate degradation; glycolysis; pyruvate from D-glyceraldehyde 3-phosphate: step 4/5. In terms of biological role, catalyzes the reversible conversion of 2-phosphoglycerate (2-PG) into phosphoenolpyruvate (PEP). It is essential for the degradation of carbohydrates via glycolysis. This Methylococcus capsulatus (strain ATCC 33009 / NCIMB 11132 / Bath) protein is Enolase 1.